We begin with the raw amino-acid sequence, 182 residues long: Sec-independent protein translocase protein TatB (182 aa).

A helical transmembrane segment spans residues 1 to 21 (MFDIGFSELLLVFVIGLIVLG). Disordered stretches follow at residues 88–107 (AAES…ASDE) and 121–182 (TQHE…SDKP). Positions 168–182 (AAPVVESSPSSSDKP) are enriched in low complexity.

This sequence belongs to the TatB family. In terms of assembly, the Tat system comprises two distinct complexes: a TatABC complex, containing multiple copies of TatA, TatB and TatC subunits, and a separate TatA complex, containing only TatA subunits. Substrates initially bind to the TatABC complex, which probably triggers association of the separate TatA complex to form the active translocon.

The protein resides in the cell inner membrane. Functionally, part of the twin-arginine translocation (Tat) system that transports large folded proteins containing a characteristic twin-arginine motif in their signal peptide across membranes. Together with TatC, TatB is part of a receptor directly interacting with Tat signal peptides. TatB may form an oligomeric binding site that transiently accommodates folded Tat precursor proteins before their translocation. The protein is Sec-independent protein translocase protein TatB of Salmonella typhi.